The sequence spans 316 residues: 4-hydroxy-3-methylbut-2-enyl diphosphate reductase (316 aa).

A [4Fe-4S] cluster-binding site is contributed by C17. Positions 46 and 79 each coordinate (2E)-4-hydroxy-3-methylbut-2-enyl diphosphate. Positions 46 and 79 each coordinate dimethylallyl diphosphate. Isopentenyl diphosphate-binding residues include H46 and H79. C101 contacts [4Fe-4S] cluster. Position 129 (H129) interacts with (2E)-4-hydroxy-3-methylbut-2-enyl diphosphate. H129 serves as a coordination point for dimethylallyl diphosphate. H129 serves as a coordination point for isopentenyl diphosphate. The Proton donor role is filled by E131. (2E)-4-hydroxy-3-methylbut-2-enyl diphosphate is bound at residue T170. Residue C200 participates in [4Fe-4S] cluster binding. Positions 228, 229, 230, and 273 each coordinate (2E)-4-hydroxy-3-methylbut-2-enyl diphosphate. Dimethylallyl diphosphate is bound by residues S228, S229, N230, and S273. Residues S228, S229, N230, and S273 each contribute to the isopentenyl diphosphate site.

The protein belongs to the IspH family. The cofactor is [4Fe-4S] cluster.

It carries out the reaction isopentenyl diphosphate + 2 oxidized [2Fe-2S]-[ferredoxin] + H2O = (2E)-4-hydroxy-3-methylbut-2-enyl diphosphate + 2 reduced [2Fe-2S]-[ferredoxin] + 2 H(+). The catalysed reaction is dimethylallyl diphosphate + 2 oxidized [2Fe-2S]-[ferredoxin] + H2O = (2E)-4-hydroxy-3-methylbut-2-enyl diphosphate + 2 reduced [2Fe-2S]-[ferredoxin] + 2 H(+). Its pathway is isoprenoid biosynthesis; dimethylallyl diphosphate biosynthesis; dimethylallyl diphosphate from (2E)-4-hydroxy-3-methylbutenyl diphosphate: step 1/1. It functions in the pathway isoprenoid biosynthesis; isopentenyl diphosphate biosynthesis via DXP pathway; isopentenyl diphosphate from 1-deoxy-D-xylulose 5-phosphate: step 6/6. Its function is as follows. Catalyzes the conversion of 1-hydroxy-2-methyl-2-(E)-butenyl 4-diphosphate (HMBPP) into a mixture of isopentenyl diphosphate (IPP) and dimethylallyl diphosphate (DMAPP). Acts in the terminal step of the DOXP/MEP pathway for isoprenoid precursor biosynthesis. The sequence is that of 4-hydroxy-3-methylbut-2-enyl diphosphate reductase from Ruegeria pomeroyi (strain ATCC 700808 / DSM 15171 / DSS-3) (Silicibacter pomeroyi).